The following is a 3933-amino-acid chain: MSNSFDNFDFSVHEVKKQELESILLQQEQEKQAKEEKESIKDTDDKPIEDTEHSTNNDKPIEPVESVESTPTTTTTTKPTDEASSSSNNNNNKIDVTIEKKEGDITGIELEELLSKIPSTYQLSTINKTIQGFSTDIREPTDKPFENTSNIETTRQLKFPPPLVPPKTEAERLEQEQKQKQYDENRKETDRKLELELERLKNKKEEVEQIRAYFQPGDQKPIDYVIELTFNIFPSDIVDKETNKLLWCPEVSPRNPGFARDKPTNGWTFDQFQRTLTYTPIESWKKSTLYTITIPAEIKVSPTNIITTQGQQFEFTTETLKIELFMPASIREYSHNQTIFIGFNQKVSPQELLPFIQATNLRSAPAHVAKGTPNVLQFIHEEIMKQDPILKDLVTGYEGRNIGIKPTFGFNSSSTVIISVLQGAPSLEGTVKKLLTEQKDFRTLQSFKPNITTAPYSPHIDLVISFGNLNSLANPSEITWRPKVTPSFPDGDWVLSANSLVYKLSDNSNWPSSTSYTVFFENGPKSTSGEQMEEIELKFQTASINLTGAFGYDGINFESLNINSKSASTSNTFSNNVILIFRYNQIVNEESFKKIFSFKVDQLLSKAVEYQIISNAAEFHSITTFRKAIKENYLRFIDTQEPGSWFAIKPLKPLGDDLGYSIEFDGSLQSMEGPLPTKLDGGYNNYFFATYPQLTCTTDLVHDSFKVSFNQPIVNNSYDYNNYVLTPDAFISSRTDVQIELDYLPVGPSVLPLIQPPIEGTWSALTRNILSFKAASFDLIKPATTYTILPQPNSQFTTPWGKVFDKAIFGEVTTTLPNVNFRYPTLSSIKANQLFCLSFNQPVDPESVIANVRLQPDTFLSAKKFEVQLVTKISLEEFEDIDYSFKNAKLDGRLVFFRSVKPLPIGSIKFSVLPGVRSLEGPLISKDETYFGTLVVEKFSIIGTSPVDGAIIHSPYFFFINFNKPLKSKDALVYIDLTENHGPEETLTTIVDKITAIASVSASIASSDSSSSNQLIENQNNITTTTTTTTTNNNNNNNEVGESTTPNLPITTTTTNKNKEIDWDQFITIKPKPEKSTAKWTYEIIGKIYRLKIEDFSIWNASTNYQIIVDKSIESKYGETMEKDTVFDFYTPYNGIESVHPSPGFIVNTDKSDIFAIHFHQRINPVEILKVLKVEGVDSFNKKIKNIVLSNVDREQVPSEYLSQMSTSFSDPLNYIMFVRMSTVVPNSSLTLTVGPNIPSAEGPELNPNKLTYTFKISDHLHINSTTYYASDRTLQILFKQPLNLTGPALQKKIPLPESWIPTITPEISSEIQRTWTAQLNTSNTLQNGYSMICCKFETSLPFSTKFTFKLPDCIESETGEFYQQGIDSEDKYEFKTSTLQLVTSVPMNGHQTALLSRPVLICFNQKVDVVELLKYLTISQVSTSEKKKTKFTLEESSDFTHIEKSVGYEQDHWISLRTNPPLIPNSSYSITLKEGAPSLEGPLLTKEAINIFFTTNCTRVYASINSDQAHISFSEPLIHLPINGSSGGSSSSSLPSSEPIIPTITIKPDPGVPLTWKAGAGETIICNEKVSTWKQSTEYKFSFPEDLVSSKGYVMDQSTLDNLTIKTSVNSIIDKSGYPTLTDSIHFIRFSQNIDPKKQISKMKIFSKSGLFNSKTNHEVRLATKDEIDEKVIFSEHLDHNINYSRLKLFIGDVYDPADPTDLLIYKFVKPLPPNTQIQYEFEEFTSTQGQLTWVKPFYNYSIKSLPPLSIIDSESSFGKKTPFYFGDTLVIKFNNTLSTSTFQANMIRVEPDIPYSITLDDQSIFLKDFKYDQFQNTDIEFKIILNTNQIMDSTGQHIDISTIVGTGGIFNKNDSTLTYRLKVVPRNFQSTFKLPFLSSSSTNGIVTFDNSDLNSKPAICLRSKNINQYVIQLYKLNPYIDYPQFLDEEVDTKTLQKFTSLKSVPAVDQPILKSGELVHCRMVDIEIPSHEVDIEIDTYIDLFEGLTNKELMIGHIGVVLYPTQNALYPNVGKNTVTPLRRCWVQCTRLNIGAVTDQKILSCWSNSTVDGSVVPNVKISSLSTVNYTQFRMKEQKKSNNLIALQKHVGNLVDGVTNEHGLLHLPLQNNYSEIHIVAENPINKDVCLLPKVFVQPNSTFKAISWYVFDDQSLYRPKTTVQIKGYLRFLFRDQFEHKLSVYNFQSTLVIKYILEDGAGLTVLKGETKLNSFSAFNFSLDLPDTINLGKTTLKLSLADENDFHLLNEQNQKIRIKSDTGKTLRTSFIHSFDVQEFKRPEFVASASFLYNETNGFTGSSYIQVKSNYFEGASLPDCETSWKVSSCKANFVPPKMSKYQFGYVENDKLLKLVDHSIKREKTITGKTDDDGLHTVKTTFNGKAPNPPSSVYIDTSVDISDINQQTTTSTVRYILHPTHNFVGIKPSFNNDKPLIIHDGNKNTPLKLMMIVCDENGIPQPDIGISITISPISGYHQFDIPLINENHQSTIVSTDTEFQHSFILSEPNYKPKENILYNISATIYEKPDNKFTTTIPLLINWSLSEYKSNDLLDSSTIGKTTTTTTTTTTTTSNNNETKQPIKLEEFKFKEIKNVNISLDKKSYISGEKCLVSIDYFEMPYQCVLSIINNGVVFTKAYEITNGKDRVEFDIQEEWAPLCSVLCDVRNVGDHYLQGTTKLSITPTTKQLTITVKPEEEIVEPGADTNINVHVTDSTGANVANAEVCLLVIDESIIALSQHNVENPLNIFYPNSSSEHAKSMLSSYFHGLSSASVLLQPKLKQGTAIIAGTQQPIIKPDTYNHILEKKILINSNDNDNFNYSSYNNNNNNNNRYNTPVRNGNIGRPTRRGSGTDKVLLDILDTAGQEEYSAMRDQYYRHGDAFILAYSINSRSSFQNLQSYYNQLCRIKDCDSYACVIVIGTKADLEDQRQVSKEDGLLYARSLGAAFIETSAKTGFNVHTAFAIVSKLSAGYTGTAENKIVIVGDGGIGKSALTVRYVQSCFVEQYDPTIEDSYRKQVSLDDDPSLDGFIPDSLRADMEGNSTLQSASLMKKRSKKSSFGGFGGSGSSSSRKYKEKSPSSSSTRTSVSTSLSSRSETLGEVGLLDFGGSDKKLSRKSSLVEEESKRQYDDDDESKSESSEYDDDDDQDYEKDGLFETELSSLSMMRKDFNALANFTPSVFTNEVGKITIPIHLPDNLTRYRIWGVVCSKDEQKFGKGESLITSKVLVSTRCVPPRFLNINDSCTIGIVVSNNSNNNRMVKIGVKCSEHLTILNSNGTSTFGHFSFVEQKKRKIIYINVKTLNTGVGSIQISCVSGKYGDAMQVSIPIFNPPTTRTTSVYGVIDDGAGVIQPIEMPQDSLPIFGSLGLDISSTILQNIHDAFLSVYNYPFERTENLASAAIGIASLYHIIGEQKSSRNLPPSKIVKSKIGKLFLDLRNRQNENGDFSTWPSYAGHSNLSFQKNDFESVHAIQAIATLIEYGYEIESSKMKQLVKNSIDWLDRYILVNLQSKDQFILATVSYALFTLYCIHSKKNKSSVTQLAMKFYQTHTYSILSLESLAWILGTLQGNDSSVVKKRDEIITYLMRNSFEENNCLYFNSYYDKLIRSQLFHSLERTTAIIARSLIQSRYNIDVVSKVIIGLMDRKENGTWKNIQTNCWVITAVAEFSSTFERSSPKCLSRGWLVNTSDSSNLKTTFCGQTPYFDGKSTISYSIEVPLSILYSKSDLENVKFNNIIKSDKQQVIEPSSNVDENSEKVETQPSSSTTSIISIPKSELWLQKEGKGKLYYRMNIKYATVDLSTEEHFNGLTIHRQYSPKSKSDKMEFDSETGVLKVSVGSKVLVTLNVQTEVDRYNLALVDKFAGGFDIVDKTDFRLEGTVWEFQNQRDERCEVFTNQMERGKYTYKYTLRASTRGEYLIPSACIEEMYDPDVFGRTNSLRVIIN.

Residues 12–46 (VHEVKKQELESILLQQEQEKQAKEEKESIKDTDDK) adopt a coiled-coil conformation. 4 disordered regions span residues 23 to 101 (ILLQ…IEKK), 136 to 189 (DIRE…RKET), 1022 to 1054 (ITTT…TTTT), and 2817 to 2839 (NNNN…RPTR). Over residues 28–62 (EQEKQAKEEKESIKDTDDKPIEDTEHSTNNDKPIE) the composition is skewed to basic and acidic residues. The segment covering 70-92 (TPTTTTTTKPTDEASSSSNNNNN) has biased composition (low complexity). Residues 136-145 (DIREPTDKPF) are compositionally biased toward basic and acidic residues. Residues 146-156 (ENTSNIETTRQ) are compositionally biased toward polar residues. A coiled-coil region spans residues 167 to 215 (KTEAERLEQEQKQKQYDENRKETDRKLELELERLKNKKEEVEQIRAYFQ). Over residues 168–189 (TEAERLEQEQKQKQYDENRKET) the composition is skewed to basic and acidic residues. Over residues 2817 to 2826 (NNNNNNNRYN) the composition is skewed to low complexity. Residues 2853–2857 (DTAGQ), 2913–2916 (TKAD), and 2976–2983 (GDGGIGKS) contribute to the GTP site. 3 disordered regions span residues 3036–3086 (LQSA…LSSR), 3107–3142 (RKSS…QDYE), and 3733–3754 (VIEP…PSSS). A compositionally biased stretch (low complexity) spans 3070 to 3086 (PSSSSTRTSVSTSLSSR). Residues 3107–3120 (RKSSLVEEESKRQY) show a composition bias toward basic and acidic residues. Over residues 3121–3141 (DDDDESKSESSEYDDDDDQDY) the composition is skewed to acidic residues.

This sequence belongs to the small GTPase superfamily. CpRas family.

The polypeptide is Circularly permutated Ras protein 2 (cpras2) (Dictyostelium discoideum (Social amoeba)).